The sequence spans 143 residues: General odorant-binding protein 28a (143 aa).

The signal sequence occupies residues 1–21 (MQSTPIILVAIVLLGAALVRA). Cystine bridges form between Cys-38-Cys-69, Cys-65-Cys-123, and Cys-113-Cys-132.

In terms of tissue distribution, expressed in antenna, mostly on the medial and posterior surface of the third antennal segment.

The protein localises to the secreted. The sequence is that of General odorant-binding protein 28a (Obp28a) from Drosophila melanogaster (Fruit fly).